A 619-amino-acid polypeptide reads, in one-letter code: Magnesium-chelatase 67 kDa subunit (619 aa).

33-40 contacts ATP; the sequence is STVGSGKS. The interval 273-321 is disordered; sequence TRMPEREPSEEEMQQEEPPPPEEQPEQEGEDENAPPDETDSDADEEQEE. Positions 280–321 are enriched in acidic residues; that stretch reads PSEEEMQQEEPPPPEEQPEQEGEDENAPPDETDSDADEEQEE. Positions 431-619 constitute a VWFA domain; sequence LFIFMVDASG…AEQIVEAALS (189 aa).

Belongs to the Mg-chelatase subunits D/I family.

The enzyme catalyses protoporphyrin IX + Mg(2+) + ATP + H2O = Mg-protoporphyrin IX + ADP + phosphate + 3 H(+). It functions in the pathway porphyrin-containing compound metabolism; bacteriochlorophyll biosynthesis. Involved in bacteriochlorophyll biosynthesis; introduces a magnesium ion into protoporphyrin IX to yield Mg-protoporphyrin IX. In Chlorobaculum parvum (strain DSM 263 / NCIMB 8327) (Chlorobium vibrioforme subsp. thiosulfatophilum), this protein is Magnesium-chelatase 67 kDa subunit (bchD).